Here is a 213-residue protein sequence, read N- to C-terminus: MRSKYIVIEGLEGAGKTTARNVVVETLEQLGIRDMVFTREPGGTQLAEKLRSLVLDIKSVGDEVITDKAEVLMFYAARVQLVETVIKPALANGTWVIGDRHDLSTQAYQGGGRGIDQHMLATLRDAVLGDFRPDLTLYLDVTPEVGLKRARARGELDRIEQESFDFFNRTRARYLELAAQDKSIHTIDATQPLESVMDAIRTTVTNWVKELDA.

10 to 17 serves as a coordination point for ATP; the sequence is GLEGAGKT.

Belongs to the thymidylate kinase family.

The enzyme catalyses dTMP + ATP = dTDP + ADP. Phosphorylation of dTMP to form dTDP in both de novo and salvage pathways of dTTP synthesis. This Escherichia coli O7:K1 (strain IAI39 / ExPEC) protein is Thymidylate kinase.